Consider the following 521-residue polypeptide: Cyclic AMP-responsive element-binding protein 3-like protein 2 (521 aa).

Residues 1–378 are Cytoplasmic-facing; the sequence is MEVLESGEQS…CKLAGTQTGT (378 aa). A compositionally biased stretch (polar residues) spans 83 to 103; that stretch reads YSLSEEPRTQSPFTHAATSDS. The interval 83–106 is disordered; that stretch reads YSLSEEPRTQSPFTHAATSDSFND. Residue serine 93 is modified to Phosphoserine. Lysine 178 is covalently cross-linked (Glycyl lysine isopeptide (Lys-Gly) (interchain with G-Cter in SUMO2)). Serine 191 is modified (phosphoserine). Positions 196 to 264 are disordered; sequence SVDQLHLPPT…PHKLQGSGPL (69 aa). Residues 208–220 are compositionally biased toward low complexity; sequence SSHSSDSEGSLSP. Residues 294–357 form the bZIP domain; the sequence is ALKKIRRKIK…RTLLQQLQKL (64 aa). Residues 296–325 form a basic motif region; it reads KKIRRKIKNKISAQESRRKKKEYMDSLEKK. Residues 336–357 form a leucine-zipper region; sequence LRKKVEVLENTNRTLLQQLQKL. Residues 379–399 traverse the membrane as a helical; Signal-anchor for type II membrane protein segment; the sequence is CLMVVVLCFAVAFGSFFQGYG. Over 400–521 the chain is Lumenal; it reads PYPSATKMAL…ELERRVNATF (122 aa). An S1P recognition motif is present at residues 427–430; that stretch reads RNLL. N-linked (GlcNAc...) asparagine glycans are attached at residues asparagine 481, asparagine 505, and asparagine 518.

It belongs to the bZIP family. ATF subfamily. In terms of assembly, binds DNA as a dimer. Post-translationally, upon ER stress, translocated to the Golgi apparatus, where it is processed by regulated intramembrane proteolysis (RIP) to release the cytosol-facing N-terminal transcription factor domain. The cleavage is performed sequentially by site-1 and site-2 proteases (S1P/MBTPS1 and S2P/MBTPS2). In terms of processing, N-glycosylated. Ubiquitinated by HRD1/SYVN1; undergoes 'Lys-48'-linked ubiquitination, followed by rapid proteasomal degradation under normal conditions. Upon ER stress, SYVN1 E3 ubiquitin-protein ligase dissociates from its substrate, ubiquitination does not occur and CREB3L2 is stabilized. In terms of tissue distribution, widely expressed, including in lung, bladder, ovary, testis and spleen. Highly expressed in chondrocytes.

It localises to the endoplasmic reticulum membrane. It is found in the nucleus. Functionally, transcription factor involved in unfolded protein response (UPR). In the absence of endoplasmic reticulum (ER) stress, inserted into ER membranes, with N-terminal DNA-binding and transcription activation domains oriented toward the cytosolic face of the membrane. In response to ER stress, transported to the Golgi, where it is cleaved in a site-specific manner by resident proteases S1P/MBTPS1 and S2P/MBTPS2. The released N-terminal cytosolic domain is translocated to the nucleus to effect transcription of specific target genes. Plays a critical role in chondrogenesis by activating the transcription of SEC23A, which promotes the transport and secretion of cartilage matrix proteins, and possibly that of ER biogenesis-related genes. In a neuroblastoma cell line, protects cells from ER stress-induced death. In vitro activates transcription of target genes via direct binding to the CRE site. The protein is Cyclic AMP-responsive element-binding protein 3-like protein 2 (Creb3l2) of Mus musculus (Mouse).